The following is a 325-amino-acid chain: Diaminopimelate epimerase (325 aa).

Substrate contacts are provided by Asn11 and Asn69. The active-site Proton donor is the Cys78. Substrate-binding positions include 79–80 (GN), Asn166, Asn203, and 221–222 (ER). The active-site Proton acceptor is the Cys230. Residue 231–232 (GT) participates in substrate binding.

Belongs to the diaminopimelate epimerase family. As to quaternary structure, homodimer.

Its subcellular location is the cytoplasm. The enzyme catalyses (2S,6S)-2,6-diaminopimelate = meso-2,6-diaminopimelate. The protein operates within amino-acid biosynthesis; L-lysine biosynthesis via DAP pathway; DL-2,6-diaminopimelate from LL-2,6-diaminopimelate: step 1/1. Its function is as follows. Catalyzes the stereoinversion of LL-2,6-diaminopimelate (L,L-DAP) to meso-diaminopimelate (meso-DAP), a precursor of L-lysine and an essential component of the bacterial peptidoglycan. In Ligilactobacillus salivarius (strain UCC118) (Lactobacillus salivarius), this protein is Diaminopimelate epimerase.